The primary structure comprises 776 residues: Transcription activator of gluconeogenesis HCAG_03671 (776 aa).

Residues 1–70 (MTASTQNGSP…NAKDPLRPRR (70 aa)) are disordered. Polar residues-rich tracts occupy residues 21 to 41 (NQES…QSPA) and 50 to 60 (ENGQKHTSTAA). A DNA-binding region (zn(2)-C6 fungal-type) is located at residues 77 to 105 (CFACQRAHLTCGDERPCQRCIKRGLQDAC). Disordered regions lie at residues 140 to 159 (RTNA…KDSR), 179 to 248 (TQAK…PFGA), 286 to 351 (GAGD…NIYN), 556 to 593 (NLNV…GGGG), and 651 to 726 (REAQ…SPKQ). Residues 142 to 155 (NASQQQNGPNSNSN) are compositionally biased toward low complexity. Over residues 195 to 217 (MQDTSINPSAFQAPSPTSTPNFD) the composition is skewed to polar residues. Residues 218–229 (LSSNPPNRNLSS) show a composition bias toward low complexity. 4 stretches are compositionally biased toward polar residues: residues 230-244 (AMTQ…QTQD), 292-322 (PSDS…NTQP), 334-351 (WNPS…NIYN), and 557-576 (LNVN…TPRN). The segment covering 657–669 (GPDGKGGGGGGGD) has biased composition (gly residues). Over residues 670 to 714 (VATTAATTSTSTSNGANSSGHANANRNNTNPNNSSPPSSSSAAAA) the composition is skewed to low complexity.

It belongs to the ERT1/acuK family.

The protein resides in the nucleus. Its function is as follows. Transcription factor which regulates nonfermentable carbon utilization. Activator of gluconeogenetic genes. The chain is Transcription activator of gluconeogenesis HCAG_03671 from Ajellomyces capsulatus (strain NAm1 / WU24) (Darling's disease fungus).